We begin with the raw amino-acid sequence, 270 residues long: Formamidopyrimidine-DNA glycosylase (270 aa).

Pro-2 serves as the catalytic Schiff-base intermediate with DNA. Glu-3 serves as the catalytic Proton donor. Lys-57 serves as the catalytic Proton donor; for beta-elimination activity. Residues His-90, Arg-109, and Lys-150 each coordinate DNA. The FPG-type zinc finger occupies 235 to 269 (LVYGNKDKPCPRCGTKIKSIIIGQRNSFFCPQCQK). Arg-259 functions as the Proton donor; for delta-elimination activity in the catalytic mechanism.

It belongs to the FPG family. Monomer. Zn(2+) serves as cofactor.

The catalysed reaction is Hydrolysis of DNA containing ring-opened 7-methylguanine residues, releasing 2,6-diamino-4-hydroxy-5-(N-methyl)formamidopyrimidine.. The enzyme catalyses 2'-deoxyribonucleotide-(2'-deoxyribose 5'-phosphate)-2'-deoxyribonucleotide-DNA = a 3'-end 2'-deoxyribonucleotide-(2,3-dehydro-2,3-deoxyribose 5'-phosphate)-DNA + a 5'-end 5'-phospho-2'-deoxyribonucleoside-DNA + H(+). In terms of biological role, involved in base excision repair of DNA damaged by oxidation or by mutagenic agents. Acts as a DNA glycosylase that recognizes and removes damaged bases. Has a preference for oxidized purines, such as 7,8-dihydro-8-oxoguanine (8-oxoG). Has AP (apurinic/apyrimidinic) lyase activity and introduces nicks in the DNA strand. Cleaves the DNA backbone by beta-delta elimination to generate a single-strand break at the site of the removed base with both 3'- and 5'-phosphates. The chain is Formamidopyrimidine-DNA glycosylase from Histophilus somni (strain 129Pt) (Haemophilus somnus).